The sequence spans 206 residues: Small ribosomal subunit protein uS4 (206 aa).

The region spanning 96–156 (TRLDNVVYRM…EKSRTQARIK (61 aa)) is the S4 RNA-binding domain.

This sequence belongs to the universal ribosomal protein uS4 family. Part of the 30S ribosomal subunit. Contacts protein S5. The interaction surface between S4 and S5 is involved in control of translational fidelity.

In terms of biological role, one of the primary rRNA binding proteins, it binds directly to 16S rRNA where it nucleates assembly of the body of the 30S subunit. With S5 and S12 plays an important role in translational accuracy. This Shewanella denitrificans (strain OS217 / ATCC BAA-1090 / DSM 15013) protein is Small ribosomal subunit protein uS4.